The sequence spans 74 residues: uncharacterized protein (74 aa).

The N-terminal stretch at 1-19 (MNPGFDAVDQETAAAQAVA) is a signal peptide.

This is an uncharacterized protein from Mycobacterium tuberculosis (strain ATCC 25618 / H37Rv).